We begin with the raw amino-acid sequence, 414 residues long: MSQNKRVVITGMGALSPIGNDVKTTWENALKGVNGIDKITRIDTEPYSVHLAGELKNFNIEDHIDKKEARRMDRFTQYAIVAAREAVKDAQLDINDNTADRIGVWIGSGIGGMETFEIAHKQLMDKGPRRVSPFFVPMLIPDMATGQVSIDLGAKGPNGATVTACATGTNSIGEAFKIVQRGDADAMITGGTEAPITHMAIAGFSASRALSTNDDIETACRPFQEGRDGFVMGEGAGILVIESLESAQARGANIYAEIVGYGTTGDAYHITAPAPEGEGGSRAMQAAMDDAGIEPKDVQYLNAHGTSTPVGDLNEVKAIKNTFGEAAKHLKVSSTKSMTGHLLGATGGIEAIFSALSIKDSKVAPTIHAVTPDPECDLDIVPNEAQDLDITYAMSNSLGFGGHNAVLVFKKFEA.

The Ketosynthase family 3 (KS3) domain occupies 4 to 411 (NKRVVITGMG…GHNAVLVFKK (408 aa)). Residues C165, H304, and H341 each act as for beta-ketoacyl synthase activity in the active site.

Belongs to the thiolase-like superfamily. Beta-ketoacyl-ACP synthases family.

The enzyme catalyses a fatty acyl-[ACP] + malonyl-[ACP] + H(+) = a 3-oxoacyl-[ACP] + holo-[ACP] + CO2. The catalysed reaction is (9Z)-hexadecenoyl-[ACP] + malonyl-[ACP] + H(+) = 3-oxo-(11Z)-octadecenoyl-[ACP] + holo-[ACP] + CO2. Its pathway is lipid metabolism; fatty acid biosynthesis. Involved in the type II fatty acid elongation cycle. Catalyzes the elongation of a wide range of acyl-ACP by the addition of two carbons from malonyl-ACP to an acyl acceptor. Can efficiently catalyze the conversion of palmitoleoyl-ACP (cis-hexadec-9-enoyl-ACP) to cis-vaccenoyl-ACP (cis-octadec-11-enoyl-ACP), an essential step in the thermal regulation of fatty acid composition. The polypeptide is 3-oxoacyl-[acyl-carrier-protein] synthase 2 (fabF) (Staphylococcus aureus (strain Mu50 / ATCC 700699)).